Reading from the N-terminus, the 955-residue chain is UPF0182 protein tll1193 (955 aa).

9 helical membrane passes run 6-26, 53-73, 98-118, 163-183, 186-206, 240-260, 280-300, 324-344, and 354-374; these read VVPL…AIAL, WSVQ…FYGC, GLGL…LIVA, WLLG…VGLF, LGIL…PVVL, LWLV…YLLA, LQGL…LERY, LYGW…WSAI, and GPIA…ILIV.

The protein belongs to the UPF0182 family.

Its subcellular location is the cell membrane. This is UPF0182 protein tll1193 from Thermosynechococcus vestitus (strain NIES-2133 / IAM M-273 / BP-1).